Here is a 192-residue protein sequence, read N- to C-terminus: Protein GrpE (192 aa).

The interval 1–34 (MSSKEQKTPNEQVSEEMENAAEQQVEATQETGEG) is disordered. The segment covering 21 to 31 (AEQQVEATQET) has biased composition (polar residues).

It belongs to the GrpE family. Homodimer.

It localises to the cytoplasm. Functionally, participates actively in the response to hyperosmotic and heat shock by preventing the aggregation of stress-denatured proteins, in association with DnaK and GrpE. It is the nucleotide exchange factor for DnaK and may function as a thermosensor. Unfolded proteins bind initially to DnaJ; upon interaction with the DnaJ-bound protein, DnaK hydrolyzes its bound ATP, resulting in the formation of a stable complex. GrpE releases ADP from DnaK; ATP binding to DnaK triggers the release of the substrate protein, thus completing the reaction cycle. Several rounds of ATP-dependent interactions between DnaJ, DnaK and GrpE are required for fully efficient folding. The chain is Protein GrpE from Yersinia enterocolitica serotype O:8 / biotype 1B (strain NCTC 13174 / 8081).